We begin with the raw amino-acid sequence, 274 residues long: Protein YeeZ (274 aa).

The N-terminal stretch at 1 to 24 (MKKVAIVGLGWLGMPLAMSLSARG) is a signal peptide. Residue 170–177 (GRFFAGKT) coordinates ATP.

The chain is Protein YeeZ (yeeZ) from Escherichia coli O157:H7.